Consider the following 21-residue polypeptide: DDKCSIGCKGSATAPTFLNGH.

In terms of tissue distribution, expressed in hemolymph.

The protein resides in the secreted. In terms of biological role, constitutes the major component of lipophorin, which mediates transport for various types of lipids in hemolymph. Acts by forming lipoprotein particles that bind lipoproteins and lipids. The chain is Apolipophorin 2 from Galleria mellonella (Greater wax moth).